The following is a 2084-amino-acid chain: RNA-directed RNA polymerase L (2084 aa).

Positions 20-221 are endonuclease; the sequence is EPGLYDQIYD…IELQKSEEEL (202 aa). 3 residues coordinate Mn(2+): His80, Asp112, and Glu126. The For endonuclease activity role is filled by Lys145. The RdRp catalytic domain maps to 969 to 1172; sequence SARSLGPGSI…FGIYSSEKST (204 aa). Position 1127 (Asp1127) interacts with Mg(2+). Residues 1695–1810 form a cap-binding region; that stretch reads AQSGTLGGFS…TDGCPVRIME (116 aa).

It belongs to the Bunyavirales RNA polymerase family. Homomultimer. Interacts with the glycoprotein N; this interaction allows efficient polymerase packaging into virus particles. Interacts with nucleoprotein N. The cofactor is Mn(2+). Mg(2+) serves as cofactor.

The protein resides in the host Golgi apparatus. It is found in the host endoplasmic reticulum. Its subcellular location is the host endoplasmic reticulum-Golgi intermediate compartment. The protein localises to the virion. The enzyme catalyses RNA(n) + a ribonucleoside 5'-triphosphate = RNA(n+1) + diphosphate. Its activity is regulated as follows. Inhibited by Baloxavir acid (BXA). RNA-dependent RNA polymerase, which is responsible for the replication and transcription of the viral RNA genome using antigenomic RNA as an intermediate. During transcription, synthesizes subgenomic RNAs and assures their capping by a cap-snatching mechanism, which involves the endonuclease activity cleaving the host capped pre-mRNAs. These short capped RNAs are then used as primers for viral transcription. The 3'-end of subgenomic mRNAs molecules are not polyadenylated. During replication, the polymerase binds the 5' and 3' vRNA extremities at distinct sites. In turn, significant conformational changes occur in the polymerase and in vRNA to initiate active RNA synthesis. As a consequence of the use of the same enzyme for both transcription and replication, these mechanisms need to be well coordinated. This Dabie bandavirus (Severe fever with thrombocytopenia virus) protein is RNA-directed RNA polymerase L.